Reading from the N-terminus, the 565-residue chain is NAD-dependent malic enzyme (565 aa).

Y104 (proton donor) is an active-site residue. R157 serves as a coordination point for NAD(+). K175 (proton acceptor) is an active-site residue. E246, D247, and D270 together coordinate a divalent metal cation. The NAD(+) site is built by D270 and N418.

Belongs to the malic enzymes family. As to quaternary structure, homotetramer. Requires Mg(2+) as cofactor. Mn(2+) is required as a cofactor.

It catalyses the reaction (S)-malate + NAD(+) = pyruvate + CO2 + NADH. It carries out the reaction oxaloacetate + H(+) = pyruvate + CO2. The chain is NAD-dependent malic enzyme from Salmonella heidelberg (strain SL476).